Reading from the N-terminus, the 124-residue chain is Small ribosomal subunit protein uS12 (124 aa).

The interval 1-29 (MPTINQLVRRPRRPRESANKAPALQHNPQ) is disordered. D90 is modified (3-methylthioaspartic acid).

It belongs to the universal ribosomal protein uS12 family. Part of the 30S ribosomal subunit. Contacts proteins S8 and S17. May interact with IF1 in the 30S initiation complex.

In terms of biological role, with S4 and S5 plays an important role in translational accuracy. Functionally, interacts with and stabilizes bases of the 16S rRNA that are involved in tRNA selection in the A site and with the mRNA backbone. Located at the interface of the 30S and 50S subunits, it traverses the body of the 30S subunit contacting proteins on the other side and probably holding the rRNA structure together. The combined cluster of proteins S8, S12 and S17 appears to hold together the shoulder and platform of the 30S subunit. This is Small ribosomal subunit protein uS12 from Anaplasma marginale (strain Florida).